Reading from the N-terminus, the 122-residue chain is MADDSNDTATDVEPDYRFTLANERTFLAWQRTALGLLAAAVALVQLVPELTIPGARQVLGVVLAILAILTSGMGLLRWQQADRAMRRHLPLPRHPTPGYLAVGLCVVGVVALALVVAKAITG.

Helical transmembrane passes span 33–53, 58–78, and 97–117; these read ALGL…LTIP, VLGV…LLRW, and PGYL…LVVA.

This sequence to E.coli YidH.

It localises to the cell membrane. This is an uncharacterized protein from Mycobacterium tuberculosis (strain CDC 1551 / Oshkosh).